Here is a 138-residue protein sequence, read N- to C-terminus: Microneme antigen L2 (138 aa).

PAN domains lie at 9–78 (CFAH…PRSC) and 82–138 (CSDA…SKRA). Intrachain disulfides connect cysteine 9/cysteine 78, cysteine 34/cysteine 56, cysteine 38/cysteine 44, cysteine 82/cysteine 86, cysteine 107/cysteine 127, and cysteine 111/cysteine 117. An a carbohydrate-binding site is contributed by serine 18. A carbohydrate-binding residues include lysine 59, tyrosine 66, and aspartate 71.

Homodimer or heterodimer. Contains six disulfide bonds.

The protein localises to the cytoplasmic vesicle. It localises to the secretory vesicle. The protein resides in the microneme. Galactose-binding lectin. Plays a role in adhesion to the host cell. Has a potential role in invasion of host cells. The protein is Microneme antigen L2 of Sarcocystis muris.